We begin with the raw amino-acid sequence, 614 residues long: Dihydroxy-acid dehydratase (614 aa).

Aspartate 81 is a Mg(2+) binding site. Cysteine 122 is a [2Fe-2S] cluster binding site. Mg(2+) is bound by residues aspartate 123 and lysine 124. Lysine 124 carries the post-translational modification N6-carboxylysine. Cysteine 195 contacts [2Fe-2S] cluster. Glutamate 491 lines the Mg(2+) pocket. Serine 517 (proton acceptor) is an active-site residue.

This sequence belongs to the IlvD/Edd family. In terms of assembly, homodimer. [2Fe-2S] cluster serves as cofactor. Requires Mg(2+) as cofactor.

It carries out the reaction (2R)-2,3-dihydroxy-3-methylbutanoate = 3-methyl-2-oxobutanoate + H2O. It catalyses the reaction (2R,3R)-2,3-dihydroxy-3-methylpentanoate = (S)-3-methyl-2-oxopentanoate + H2O. It functions in the pathway amino-acid biosynthesis; L-isoleucine biosynthesis; L-isoleucine from 2-oxobutanoate: step 3/4. Its pathway is amino-acid biosynthesis; L-valine biosynthesis; L-valine from pyruvate: step 3/4. Functions in the biosynthesis of branched-chain amino acids. Catalyzes the dehydration of (2R,3R)-2,3-dihydroxy-3-methylpentanoate (2,3-dihydroxy-3-methylvalerate) into 2-oxo-3-methylpentanoate (2-oxo-3-methylvalerate) and of (2R)-2,3-dihydroxy-3-methylbutanoate (2,3-dihydroxyisovalerate) into 2-oxo-3-methylbutanoate (2-oxoisovalerate), the penultimate precursor to L-isoleucine and L-valine, respectively. The sequence is that of Dihydroxy-acid dehydratase from Actinobacillus succinogenes (strain ATCC 55618 / DSM 22257 / CCUG 43843 / 130Z).